The primary structure comprises 350 residues: Serine-threonine kinase receptor-associated protein (350 aa).

WD repeat units follow at residues 12-56 (GHTR…GTFL), 57-96 (GHKG…ELMT), 98-137 (AHKH…AEPK), 141-179 (GHTS…EVKS), 180-212 (LNFN…HSAV), 221-262 (EAPA…ESYK), and 263-302 (GHFG…TYGL). Residues Ser-312, Ser-335, and Ser-338 each carry the phosphoserine modification.

Belongs to the WD repeat STRAP family. As to quaternary structure, part of the core SMN complex that contains SMN1, GEMIN2/SIP1, DDX20/GEMIN3, GEMIN4, GEMIN5, GEMIN6, GEMIN7, GEMIN8 and STRAP/UNRIP. Part of the SMN-Sm complex that contains SMN1, GEMIN2/SIP1, DDX20/GEMIN3, GEMIN4, GEMIN5, GEMIN6, GEMIN7, GEMIN8, STRAP/UNRIP and the Sm proteins SNRPB, SNRPD1, SNRPD2, SNRPD3, SNRPE, SNRPF and SNRPG. Associates with the SMN complex in the cytoplasm but not in the nucleus. Interacts with GEMIN6; the interaction is direct. Interacts with GEMIN7; the interaction is direct. Interacts with CSDE1/UNR and MAWBP. Interacts with PDPK1. Interacts with TRIM48.

It localises to the cytoplasm. The protein resides in the nucleus. The SMN complex catalyzes the assembly of small nuclear ribonucleoproteins (snRNPs), the building blocks of the spliceosome, and thereby plays an important role in the splicing of cellular pre-mRNAs. Most spliceosomal snRNPs contain a common set of Sm proteins SNRPB, SNRPD1, SNRPD2, SNRPD3, SNRPE, SNRPF and SNRPG that assemble in a heptameric protein ring on the Sm site of the small nuclear RNA to form the core snRNP (Sm core). In the cytosol, the Sm proteins SNRPD1, SNRPD2, SNRPE, SNRPF and SNRPG are trapped in an inactive 6S pICln-Sm complex by the chaperone CLNS1A that controls the assembly of the core snRNP. To assemble core snRNPs, the SMN complex accepts the trapped 5Sm proteins from CLNS1A forming an intermediate. Binding of snRNA inside 5Sm triggers eviction of the SMN complex, thereby allowing binding of SNRPD3 and SNRPB to complete assembly of the core snRNP. STRAP plays a role in the cellular distribution of the SMN complex. Negatively regulates TGF-beta signaling but positively regulates the PDPK1 kinase activity by enhancing its autophosphorylation and by significantly reducing the association of PDPK1 with 14-3-3 protein. This chain is Serine-threonine kinase receptor-associated protein (STRAP), found in Homo sapiens (Human).